Consider the following 226-residue polypeptide: Flagellar L-ring protein (226 aa).

An N-terminal signal peptide occupies residues 1–15 (MKRLAVSILCLALAG). Residue Cys16 is the site of N-palmitoyl cysteine attachment. A lipid anchor (S-diacylglycerol cysteine) is attached at Cys16.

The protein belongs to the FlgH family. In terms of assembly, the basal body constitutes a major portion of the flagellar organelle and consists of four rings (L,P,S, and M) mounted on a central rod.

The protein localises to the cell outer membrane. The protein resides in the bacterial flagellum basal body. In terms of biological role, assembles around the rod to form the L-ring and probably protects the motor/basal body from shearing forces during rotation. In Geobacter metallireducens (strain ATCC 53774 / DSM 7210 / GS-15), this protein is Flagellar L-ring protein.